The following is a 103-amino-acid chain: Histone H4 (103 aa).

Over residues 1–14 (MSGRGKGGKGLGKG) the composition is skewed to gly residues. Residues 1 to 20 (MSGRGKGGKGLGKGGAKRHR) form a disordered region. Lys6 is subject to N6-acetyl-N6-methyllysine; alternate. 3 positions are modified to N6-methyllysine; alternate: Lys6, Lys9, and Lys13. Lys13 is modified (N6-acetyl-N6-methyllysine; alternate). A DNA-binding region spans residues 17–21 (KRHRK). At Lys92 the chain carries N6-glutaryllysine.

Belongs to the histone H4 family. The nucleosome is a histone octamer containing two molecules each of H2A, H2B, H3 and H4 assembled in one H3-H4 heterotetramer and two H2A-H2B heterodimers. The octamer wraps approximately 147 bp of DNA. In terms of processing, glutarylation at Lys-92 (H4K91glu) destabilizes nucleosomes by promoting dissociation of the H2A-H2B dimers from nucleosomes.

It is found in the nucleus. The protein resides in the chromosome. Its function is as follows. Core component of nucleosome. Nucleosomes wrap and compact DNA into chromatin, limiting DNA accessibility to the cellular machineries which require DNA as a template. Histones thereby play a central role in transcription regulation, DNA repair, DNA replication and chromosomal stability. DNA accessibility is regulated via a complex set of post-translational modifications of histones, also called histone code, and nucleosome remodeling. The chain is Histone H4 (HHF1) from Candida glabrata (strain ATCC 2001 / BCRC 20586 / JCM 3761 / NBRC 0622 / NRRL Y-65 / CBS 138) (Yeast).